The sequence spans 250 residues: Probable transcriptional regulatory protein RC1_1808 (250 aa).

Residues 1 to 21 (MAGHSQFKNIMHRKGAQDAKR) form a disordered region.

Belongs to the TACO1 family.

It is found in the cytoplasm. This is Probable transcriptional regulatory protein RC1_1808 from Rhodospirillum centenum (strain ATCC 51521 / SW).